A 236-amino-acid polypeptide reads, in one-letter code: Carbonyl reductase family member 4 (236 aa).

Residues 11-14 (SRGI), 34-35 (RD), aspartate 55, and 82-84 (SAG) each bind NADP(+). Serine 134 serves as a coordination point for substrate. Residues tyrosine 147, lysine 151, and 180–182 (IHT) contribute to the NADP(+) site. Tyrosine 147 functions as the Proton acceptor in the catalytic mechanism.

Belongs to the short-chain dehydrogenases/reductases (SDR) family. As to quaternary structure, homotetramer (in vitro). Heterotetramer with HSD17B8; contains two molecules each of HSD17B8 and CBR4.

Its subcellular location is the mitochondrion matrix. It functions in the pathway lipid metabolism; fatty acid biosynthesis. In terms of biological role, the heterotetramer with HSD17B8 has NADH-dependent 3-ketoacyl-acyl carrier protein reductase activity, and thereby plays a role in mitochondrial fatty acid biosynthesis. Within the heterotetramer, HSD17B8 binds NADH; CBR4 binds NADPD. The homotetramer has NADPH-dependent quinone reductase activity. Both homotetramer and the heterotetramer have broad in vitro substrate specificity and can reduce 9,10-phenanthrenequinone, 1,4-benzoquinone and various other o-quinones and p-quinones. The polypeptide is Carbonyl reductase family member 4 (cbr4) (Xenopus tropicalis (Western clawed frog)).